The chain runs to 272 residues: 3-methyl-2-oxobutanoate hydroxymethyltransferase (272 aa).

Mg(2+)-binding residues include Asp-43 and Asp-82. 3-methyl-2-oxobutanoate-binding positions include 43 to 44, Asp-82, and Lys-112; that span reads DS. Glu-114 contributes to the Mg(2+) binding site. Glu-179 functions as the Proton acceptor in the catalytic mechanism.

This sequence belongs to the PanB family. In terms of assembly, homodecamer; pentamer of dimers. It depends on Mg(2+) as a cofactor.

The protein localises to the cytoplasm. The enzyme catalyses 3-methyl-2-oxobutanoate + (6R)-5,10-methylene-5,6,7,8-tetrahydrofolate + H2O = 2-dehydropantoate + (6S)-5,6,7,8-tetrahydrofolate. Its pathway is cofactor biosynthesis; (R)-pantothenate biosynthesis; (R)-pantoate from 3-methyl-2-oxobutanoate: step 1/2. Functionally, catalyzes the reversible reaction in which hydroxymethyl group from 5,10-methylenetetrahydrofolate is transferred onto alpha-ketoisovalerate to form ketopantoate. This is 3-methyl-2-oxobutanoate hydroxymethyltransferase from Staphylococcus aureus (strain bovine RF122 / ET3-1).